Reading from the N-terminus, the 323-residue chain is Ankyrin repeat and SOCS box protein 11 (323 aa).

6 ANK repeats span residues 64 to 93 (ADRS…NVNL), 97 to 126 (NRVS…HVNG), 130 to 159 (HGAT…KAQL), 162 to 191 (HLAS…NIDQ), 195 to 224 (HLGT…NVNH), and 227 to 256 (WLDT…NLKC). In terms of domain architecture, SOCS box spans 273–323 (SVEQALLLREGPPALSQLCRLCVRKCLGRNCHKTIHKLYLPDPLEKFLLYQ).

This sequence belongs to the ankyrin SOCS box (ASB) family. As to quaternary structure, substrate-recognition component of the ECS(ASB11) complex, composed of ASB11, CUL5, ELOB, ELOC and RNF7/RBX2.

It is found in the endoplasmic reticulum. It functions in the pathway protein modification; protein ubiquitination. Its function is as follows. Substrate-recognition component of a cullin-5-RING E3 ubiquitin-protein ligase complex (ECS complex, also named CRL5 complex), which mediates the ubiquitination and subsequent proteasomal degradation of target proteins, such as BIK, DIRAS2 and RPN1. The ECS(ASB11) complex acts as a regulator of the endoplasmic reticulum unfolded protein response by mediating ubiquitination and degradation of BIK. This is Ankyrin repeat and SOCS box protein 11 (ASB11) from Bos taurus (Bovine).